Reading from the N-terminus, the 327-residue chain is Beta-1,4-galactosyltransferase 7 (327 aa).

Topologically, residues 1-30 (MFPSRRKAAQLPWEDGRSGLLSGGLPRKCS) are cytoplasmic. Residues 31–51 (VFHLFVACLSLGFFSLLWLQL) form a helical; Signal-anchor for type II membrane protein membrane-spanning segment. Topologically, residues 52-327 (SCSGDVARAV…KTATPWCTFS (276 aa)) are lumenal. Residues 63-87 (GQGQETSGPPRACPPEPPPEHWEED) form a disordered region. UDP-alpha-D-galactose contacts are provided by residues 100–104 (PFRER) and 139–141 (FNR). Asparagine 154 carries N-linked (GlcNAc...) asparagine glycosylation. Residues 164-165 (VD), tyrosine 194, and tryptophan 224 each bind UDP-alpha-D-galactose. Position 165 (aspartate 165) interacts with Mn(2+). N-acetyl-D-glucosamine is bound at residue 226 to 229 (REDD). A Mn(2+)-binding site is contributed by histidine 257. UDP-alpha-D-galactose is bound by residues 257-259 (HLH) and arginine 266. An intrachain disulfide couples cysteine 316 to cysteine 324.

Belongs to the glycosyltransferase 7 family. Requires Mn(2+) as cofactor. High expression in heart, pancreas and liver, medium in placenta and kidney, low in brain, skeletal muscle and lung.

Its subcellular location is the golgi apparatus. It is found in the golgi stack membrane. The catalysed reaction is 3-O-(beta-D-xylosyl)-L-seryl-[protein] + UDP-alpha-D-galactose = 3-O-(beta-D-galactosyl-(1-&gt;4)-beta-D-xylosyl)-L-seryl-[protein] + UDP + H(+). The protein operates within protein modification; protein glycosylation. Required for the biosynthesis of the tetrasaccharide linkage region of proteoglycans, especially for small proteoglycans in skin fibroblasts. This Homo sapiens (Human) protein is Beta-1,4-galactosyltransferase 7 (B4GALT7).